A 619-amino-acid chain; its full sequence is 1-deoxy-D-xylulose-5-phosphate synthase (619 aa).

Thiamine diphosphate-binding positions include histidine 74 and 115–117 (GHS). Aspartate 146 is a Mg(2+) binding site. Thiamine diphosphate is bound by residues 147-148 (GA), asparagine 175, tyrosine 285, and glutamate 365. Residue asparagine 175 coordinates Mg(2+).

The protein belongs to the transketolase family. DXPS subfamily. In terms of assembly, homodimer. Mg(2+) is required as a cofactor. It depends on thiamine diphosphate as a cofactor.

It carries out the reaction D-glyceraldehyde 3-phosphate + pyruvate + H(+) = 1-deoxy-D-xylulose 5-phosphate + CO2. It functions in the pathway metabolic intermediate biosynthesis; 1-deoxy-D-xylulose 5-phosphate biosynthesis; 1-deoxy-D-xylulose 5-phosphate from D-glyceraldehyde 3-phosphate and pyruvate: step 1/1. Functionally, catalyzes the acyloin condensation reaction between C atoms 2 and 3 of pyruvate and glyceraldehyde 3-phosphate to yield 1-deoxy-D-xylulose-5-phosphate (DXP). In Clostridium perfringens (strain 13 / Type A), this protein is 1-deoxy-D-xylulose-5-phosphate synthase.